The primary structure comprises 279 residues: Thermitase (279 aa).

D5 is a Ca(2+) binding site. The 266-residue stretch at 12–277 (QYGPQKIQAP…KGRVNAYKAV (266 aa)) folds into the Peptidase S8 domain. D38 (charge relay system) is an active-site residue. D47, D57, D60, D62, T64, and Q66 together coordinate Ca(2+). H71 serves as the catalytic Charge relay system. Residues V82, N85, T87, and I89 each contribute to the Ca(2+) site. Na(+) contacts are provided by A173, Y175, and A178. V199 and D201 together coordinate Ca(2+). D201 provides a ligand contact to Na(+). S225 functions as the Charge relay system in the catalytic mechanism.

The protein belongs to the peptidase S8 family. Requires Ca(2+) as cofactor. Na(+) serves as cofactor.

The protein localises to the secreted. The catalysed reaction is Hydrolysis of proteins, including collagen.. This Thermoactinomyces vulgaris protein is Thermitase.